A 178-amino-acid chain; its full sequence is Large ribosomal subunit protein uL6 (178 aa).

It belongs to the universal ribosomal protein uL6 family. In terms of assembly, part of the 50S ribosomal subunit.

This protein binds to the 23S rRNA, and is important in its secondary structure. It is located near the subunit interface in the base of the L7/L12 stalk, and near the tRNA binding site of the peptidyltransferase center. This is Large ribosomal subunit protein uL6 from Streptococcus agalactiae serotype Ia (strain ATCC 27591 / A909 / CDC SS700).